The following is a 215-amino-acid chain: MSKVYDWFEERLEIQAIADDITSKYVPPHVNIFYCLGGITLTCFLVQVATGFAMTFYYRPTVTEAFASVQYIMTEANFGWLIRSVHRWSASMMVLMMILHVFRVYLTGGFKKPRELTWVTGVVLGVLTASFGVTGYSLPWDQIGYWAVKIVTGVPDAIPVIGSPLVELLRGSASVGQSTLTRFYSLHTFVLPLLTAVFMLMHFLMIRKQGISGPL.

A helical membrane pass occupies residues Ile32 to Phe52. Cys35 provides a ligand contact to heme c. Heme b-binding residues include His86 and His100. The next 3 membrane-spanning stretches (helical) occupy residues Ala90–Phe110, Leu116–Tyr136, and Leu186–Ile206. His187 and His202 together coordinate heme b.

The protein belongs to the cytochrome b family. PetB subfamily. The 4 large subunits of the cytochrome b6-f complex are cytochrome b6, subunit IV (17 kDa polypeptide, PetD), cytochrome f and the Rieske protein, while the 4 small subunits are PetG, PetL, PetM and PetN. The complex functions as a dimer. Heme b is required as a cofactor. The cofactor is heme c.

It is found in the plastid. The protein localises to the chloroplast thylakoid membrane. Functionally, component of the cytochrome b6-f complex, which mediates electron transfer between photosystem II (PSII) and photosystem I (PSI), cyclic electron flow around PSI, and state transitions. The chain is Cytochrome b6 from Arabidopsis thaliana (Mouse-ear cress).